The chain runs to 278 residues: 1-acyl-sn-glycerol-3-phosphate acyltransferase beta (278 aa).

The signal sequence occupies residues 1 to 23 (MELWPCLAAALLLLLLLVQLSRA). Residues 24–29 (AEFYAK) are Lumenal-facing. Residues 30–50 (VALYCALCFTVSAVASLVCLL) form a helical membrane-spanning segment. At 51–121 (RHGGRTVENM…PERCVQIAKR (71 aa)) the chain is on the cytoplasmic side. The short motif at 98-103 (HQSILD) is the HXXXXD motif element. Residues 122 to 142 (ELLFLGPVGLIMYLGGVFFIN) form a helical membrane-spanning segment. At 143 to 278 (RQRSSTAMTV…TAGSGVQPAQ (136 aa)) the chain is on the lumenal side. The EGTR motif signature appears at 172–175 (EGTR).

This sequence belongs to the 1-acyl-sn-glycerol-3-phosphate acyltransferase family. In terms of tissue distribution, expressed predominantly in adipose tissue, pancreas and liver.

The protein resides in the endoplasmic reticulum membrane. The enzyme catalyses a 1-acyl-sn-glycero-3-phosphate + an acyl-CoA = a 1,2-diacyl-sn-glycero-3-phosphate + CoA. It carries out the reaction 1-(9Z-octadecenoyl)-sn-glycero-3-phosphate + (9Z)-octadecenoyl-CoA = 1,2-di-(9Z-octadecenoyl)-sn-glycero-3-phosphate + CoA. The catalysed reaction is 1-(9Z-octadecenoyl)-sn-glycero-3-phosphate + hexadecanoyl-CoA = 1-(9Z)-octadecenoyl-2-hexadecanoyl-sn-glycero-3-phosphate + CoA. It catalyses the reaction heptadecanoyl-CoA + 1-(9Z-octadecenoyl)-sn-glycero-3-phosphate = 1-(9Z)-octadecenoyl-2-heptadecanoyl-sn-glycero-3-phosphate + CoA. The enzyme catalyses 1-(9Z-octadecenoyl)-sn-glycero-3-phosphate + (9Z,12Z)-octadecadienoyl-CoA = 1-(9Z)-octadecenoyl-2-(9Z,12Z)-octadecadienoyl-sn-glycero-3-phosphate + CoA. It carries out the reaction 1-(9Z-octadecenoyl)-sn-glycero-3-phosphate + tetradecanoyl-CoA = 1-(9Z)-octadecenoyl-2-tetradecanoyl-sn-glycero-3-phosphate + CoA. The catalysed reaction is pentadecanoyl-CoA + 1-(9Z-octadecenoyl)-sn-glycero-3-phosphate = 1-(9Z)-octadecenoyl-2-pentadecanoyl-sn-glycero-3-phosphate + CoA. It catalyses the reaction 1-hexadecanoyl-sn-glycero-3-phosphate + (9Z)-octadecenoyl-CoA = 1-hexadecanoyl-2-(9Z-octadecenoyl)-sn-glycero-3-phosphate + CoA. The enzyme catalyses 1-tetradecanoyl-sn-glycerol 3-phosphate + (9Z)-octadecenoyl-CoA = 1-tetradecanoyl-2-(9Z)-octadecenoyl-sn-glycero-3-phosphate + CoA. It carries out the reaction 1-(9Z,12Z,15Z)-octadecatrienoyl-sn-glycero-3-phosphate + (9Z)-octadecenoyl-CoA = 1-(9Z,12Z,15Z)-octadecatrienoyl-2-(9Z)-octadecenoyl-sn-glycero-3-phosphate + CoA. The catalysed reaction is 1-(6Z,9Z,12Z-octadecatrienoyl)-sn-glycero-3-phosphate + (9Z)-octadecenoyl-CoA = (6Z,9Z,12Z)-octadecatrienoyl-2-(9Z)-octadecenoyl-sn-glycero-3-phosphate + CoA. It catalyses the reaction 1-eicosanoyl-sn-glycero-3-phosphate + (9Z)-octadecenoyl-CoA = 1-eicosanoyl-2-(9Z)-octadecenoyl-sn-glycero-3-phosphate + CoA. The enzyme catalyses 1-hexadecanoyl-sn-glycero-3-phosphate + octadecanoyl-CoA = 1-hexadecanoyl-2-octadecanoyl-sn-glycero-3-phosphate + CoA. It carries out the reaction 1-hexadecanoyl-sn-glycero-3-phosphate + (5Z,8Z,11Z,14Z)-eicosatetraenoyl-CoA = 1-hexadecanoyl-2-(5Z,8Z,11Z,14Z-eicosatetraenoyl)-sn-glycero-3-phosphate + CoA. The catalysed reaction is 1-hexadecanoyl-sn-glycero-3-phosphate + hexadecanoyl-CoA = 1,2-dihexadecanoyl-sn-glycero-3-phosphate + CoA. It catalyses the reaction 1-hexadecanoyl-sn-glycero-3-phosphate + tetradecanoyl-CoA = 1-hexadecanoyl-2-tetradecanoyl-sn-glycero-3-phosphate + CoA. The enzyme catalyses (11Z)-octadecenoyl-CoA + 1-(9Z-octadecenoyl)-sn-glycero-3-phosphate = 1-(9Z)-octadecenoyl-2-(11Z)-octadecenoyl-sn-glycero-3-phosphate + CoA. The protein operates within phospholipid metabolism; CDP-diacylglycerol biosynthesis; CDP-diacylglycerol from sn-glycerol 3-phosphate: step 2/3. Functionally, converts 1-acyl-sn-glycerol-3-phosphate (lysophosphatidic acid or LPA) into 1,2-diacyl-sn-glycerol-3-phosphate (phosphatidic acid or PA) by incorporating an acyl moiety at the sn-2 position of the glycerol backbone. In Homo sapiens (Human), this protein is 1-acyl-sn-glycerol-3-phosphate acyltransferase beta (AGPAT2).